Consider the following 125-residue polypeptide: MDNKMDLLSAYQRILSLSEQMLNLAKNEKWDELVDMEITYLKAVEVISHSSISSTTSLSLQQKMTNILQIILDNENEIKKLLQKRLDELSKLIKQASQQQLLNDSYGQFPVEPYHNTLMNSTEQK.

The interval 1–50 (MDNKMDLLSAYQRILSLSEQMLNLAKNEKWDELVDMEITYLKAVEVISHS) is required for homodimerization. The segment at 60-98 (LQQKMTNILQIILDNENEIKKLLQKRLDELSKLIKQASQ) is fliD binding.

This sequence belongs to the FliT family. In terms of assembly, homodimer. Interacts with FliD and FlhC.

The protein localises to the cytoplasm. It localises to the cytosol. In terms of biological role, dual-function protein that regulates the transcription of class 2 flagellar operons and that also acts as an export chaperone for the filament-capping protein FliD. As a transcriptional regulator, acts as an anti-FlhDC factor; it directly binds FlhC, thus inhibiting the binding of the FlhC/FlhD complex to class 2 promoters, resulting in decreased expression of class 2 flagellar operons. As a chaperone, effects FliD transition to the membrane by preventing its premature polymerization, and by directing it to the export apparatus. This is Flagellar protein FliT from Photorhabdus laumondii subsp. laumondii (strain DSM 15139 / CIP 105565 / TT01) (Photorhabdus luminescens subsp. laumondii).